The sequence spans 296 residues: GTPase Era (296 aa).

In terms of domain architecture, Era-type G spans 3 to 170 (KSGFVTIVGR…KELMFKYIPE (168 aa)). A G1 region spans residues 11–18 (GRPNVGKS). 11–18 (GRPNVGKS) contributes to the GTP binding site. Positions 37 to 41 (QTTRN) are G2. The tract at residues 58-61 (DTPG) is G3. GTP-binding positions include 58 to 62 (DTPGI) and 120 to 123 (NKID). The interval 120–123 (NKID) is G4. The interval 149 to 151 (ISA) is G5. Residues 201–278 (LSEEVPHGIA…YIRLWVKVKE (78 aa)) form the KH type-2 domain.

The protein belongs to the TRAFAC class TrmE-Era-EngA-EngB-Septin-like GTPase superfamily. Era GTPase family. In terms of assembly, monomer.

It is found in the cytoplasm. It localises to the cell membrane. Its function is as follows. An essential GTPase that binds both GDP and GTP, with rapid nucleotide exchange. Plays a role in 16S rRNA processing and 30S ribosomal subunit biogenesis and possibly also in cell cycle regulation and energy metabolism. This chain is GTPase Era, found in Clostridium botulinum (strain Langeland / NCTC 10281 / Type F).